We begin with the raw amino-acid sequence, 669 residues long: MTGLFQLVSSYSPSGDQPAAVQKLVTNFHAGIAKQVLLGVTGSGKTYTIANVVEQIQKPTLVMAPNKTLAAQLYGEFKAFFPHNAVEYFVSYYDYYQPEAYVPASDTFIEKDSSINEYIEQMRLAATKALLSRSDVLVVATVSAIYGLGAPEDYLSLRLILSLGEHIEQRQLIRHLTELQYTRNELDLVRGSFRVRGEVVDVFPAESEMEALRIELFDGEIESLSLFDPLTGQTVRKLQRFSVYPKTHYATTRERTLSAVDTIKDELKEYLELLYGRNKLVEAQRLAQRTQFDLEMMAEVGYCNGIENYSRHLTGKAPGEPPPTLFDYLPPDALLVIDESHVTIPQIGAMFKGDRSRKETLVEFGFRLPSALDNRPLRFEEWEVRSPRSIYVSATPGSYEFRESAGEVIELLVRPTGLIDPEIEIRPVATQVDDLISQINACIKLGDRVLVTTLTKRMAENLTEYLSEQGIRIRYLHSEIDTVERVEIIRDLRLGKFDVLVGINLLREGLDMPEVSLVAILDADKEGFLRSTSSLIQTIGRAARSVRGRAILYADKVTRSMRAAIDETERRRQKQKEYNAENGIVPKSVVRPISDILEGARDGVEVKSKGKGRRVDEVPADYGALNQAEIAAQMKVLEQKMYQHARDLEFEDAARIRDQIQRLREAGLG.

In terms of domain architecture, Helicase ATP-binding spans 26–183 (TNFHAGIAKQ…RHLTELQYTR (158 aa)). 39-46 (GVTGSGKT) serves as a coordination point for ATP. The Beta-hairpin motif lies at 92–115 (YYDYYQPEAYVPASDTFIEKDSSI). A Helicase C-terminal domain is found at 431–597 (QVDDLISQIN…SVVRPISDIL (167 aa)). The region spanning 631–666 (AAQMKVLEQKMYQHARDLEFEDAARIRDQIQRLREA) is the UVR domain.

The protein belongs to the UvrB family. As to quaternary structure, forms a heterotetramer with UvrA during the search for lesions. Interacts with UvrC in an incision complex.

It is found in the cytoplasm. Its function is as follows. The UvrABC repair system catalyzes the recognition and processing of DNA lesions. A damage recognition complex composed of 2 UvrA and 2 UvrB subunits scans DNA for abnormalities. Upon binding of the UvrA(2)B(2) complex to a putative damaged site, the DNA wraps around one UvrB monomer. DNA wrap is dependent on ATP binding by UvrB and probably causes local melting of the DNA helix, facilitating insertion of UvrB beta-hairpin between the DNA strands. Then UvrB probes one DNA strand for the presence of a lesion. If a lesion is found the UvrA subunits dissociate and the UvrB-DNA preincision complex is formed. This complex is subsequently bound by UvrC and the second UvrB is released. If no lesion is found, the DNA wraps around the other UvrB subunit that will check the other stand for damage. The polypeptide is UvrABC system protein B (Xylella fastidiosa (strain M23)).